The sequence spans 223 residues: Phosphoribosylformylglycinamidine synthase subunit PurQ (223 aa).

The region spanning Ser3–Ala223 is the Glutamine amidotransferase type-1 domain. Cys86 serves as the catalytic Nucleophile. Active-site residues include His196 and Glu198.

As to quaternary structure, part of the FGAM synthase complex composed of 1 PurL, 1 PurQ and 2 PurS subunits.

Its subcellular location is the cytoplasm. The enzyme catalyses N(2)-formyl-N(1)-(5-phospho-beta-D-ribosyl)glycinamide + L-glutamine + ATP + H2O = 2-formamido-N(1)-(5-O-phospho-beta-D-ribosyl)acetamidine + L-glutamate + ADP + phosphate + H(+). It catalyses the reaction L-glutamine + H2O = L-glutamate + NH4(+). Its pathway is purine metabolism; IMP biosynthesis via de novo pathway; 5-amino-1-(5-phospho-D-ribosyl)imidazole from N(2)-formyl-N(1)-(5-phospho-D-ribosyl)glycinamide: step 1/2. In terms of biological role, part of the phosphoribosylformylglycinamidine synthase complex involved in the purines biosynthetic pathway. Catalyzes the ATP-dependent conversion of formylglycinamide ribonucleotide (FGAR) and glutamine to yield formylglycinamidine ribonucleotide (FGAM) and glutamate. The FGAM synthase complex is composed of three subunits. PurQ produces an ammonia molecule by converting glutamine to glutamate. PurL transfers the ammonia molecule to FGAR to form FGAM in an ATP-dependent manner. PurS interacts with PurQ and PurL and is thought to assist in the transfer of the ammonia molecule from PurQ to PurL. This is Phosphoribosylformylglycinamidine synthase subunit PurQ from Rhizobium johnstonii (strain DSM 114642 / LMG 32736 / 3841) (Rhizobium leguminosarum bv. viciae).